Reading from the N-terminus, the 213-residue chain is tRNA (guanine-N(7)-)-methyltransferase (213 aa).

The S-adenosyl-L-methionine site is built by glutamate 43, aspartate 68, asparagine 95, and asparagine 117. Substrate is bound by residues aspartate 153 and 190 to 193 (TEYE).

It belongs to the class I-like SAM-binding methyltransferase superfamily. TrmB family.

It carries out the reaction guanosine(46) in tRNA + S-adenosyl-L-methionine = N(7)-methylguanosine(46) in tRNA + S-adenosyl-L-homocysteine. Its pathway is tRNA modification; N(7)-methylguanine-tRNA biosynthesis. Its function is as follows. Catalyzes the formation of N(7)-methylguanine at position 46 (m7G46) in tRNA. The chain is tRNA (guanine-N(7)-)-methyltransferase from Desulfitobacterium hafniense (strain DSM 10664 / DCB-2).